A 121-amino-acid chain; its full sequence is Ribonuclease P protein component (121 aa).

It belongs to the RnpA family. In terms of assembly, consists of a catalytic RNA component (M1 or rnpB) and a protein subunit.

It catalyses the reaction Endonucleolytic cleavage of RNA, removing 5'-extranucleotides from tRNA precursor.. In terms of biological role, RNaseP catalyzes the removal of the 5'-leader sequence from pre-tRNA to produce the mature 5'-terminus. It can also cleave other RNA substrates such as 4.5S RNA. The protein component plays an auxiliary but essential role in vivo by binding to the 5'-leader sequence and broadening the substrate specificity of the ribozyme. This chain is Ribonuclease P protein component, found in Oceanobacillus iheyensis (strain DSM 14371 / CIP 107618 / JCM 11309 / KCTC 3954 / HTE831).